Consider the following 235-residue polypeptide: MKFTFCLTVLAGTFFSAHSSVQKDDPSPYLVYLKSHFNPCVGVLIKSNWVLAPAHCYLPNLKVMLGNLRIRIRDGTEQTINPIQIIRYWNHSHTAPQDDLMLIRLAKPAILNEKVQPIALATSTVKPGTICMLSGLDWSQNNNGRHPDLRQNLEAPVMSDTACQETEQGKSHRNSICVKFLKVFSRIFGELAVATVICKNKLQGIEVGHFMGGDVGIYTNVQKYVSWIESTTKDK.

The first 19 residues, 1 to 19 (MKFTFCLTVLAGTFFSAHS), serve as a signal peptide directing secretion. The region spanning 20 to 233 (SVQKDDPSPY…YVSWIESTTK (214 aa)) is the Peptidase S1 domain. Disulfide bonds link cysteine 40/cysteine 56, cysteine 131/cysteine 198, and cysteine 163/cysteine 177.

This sequence belongs to the peptidase S1 family.

Its subcellular location is the cytoplasmic vesicle. It is found in the secretory vesicle. The protein resides in the acrosome. The protein localises to the secreted. Its function is as follows. Plays a role in male fertility. May have a role in sperm migration or binding to zona-intact eggs. Involved in the activation of the proacrosin/acrosin system. The protein is Probable inactive serine protease 37 of Bos taurus (Bovine).